Consider the following 307-residue polypeptide: 4-diphosphocytidyl-2-C-methyl-D-erythritol kinase (307 aa).

Residue Lys-9 is part of the active site. 94 to 104 contributes to the ATP binding site; it reads PIGAGLAGGSS. Asp-136 is a catalytic residue.

Belongs to the GHMP kinase family. IspE subfamily.

The catalysed reaction is 4-CDP-2-C-methyl-D-erythritol + ATP = 4-CDP-2-C-methyl-D-erythritol 2-phosphate + ADP + H(+). It participates in isoprenoid biosynthesis; isopentenyl diphosphate biosynthesis via DXP pathway; isopentenyl diphosphate from 1-deoxy-D-xylulose 5-phosphate: step 3/6. Catalyzes the phosphorylation of the position 2 hydroxy group of 4-diphosphocytidyl-2C-methyl-D-erythritol. This Synechococcus sp. (strain CC9605) protein is 4-diphosphocytidyl-2-C-methyl-D-erythritol kinase.